Reading from the N-terminus, the 91-residue chain is Small ribosomal subunit protein uS19 (91 aa).

The segment at 72–91 (GEFSPTRKFGGHGDDKKKKK) is disordered. A compositionally biased stretch (basic and acidic residues) spans 82 to 91 (GHGDDKKKKK).

It belongs to the universal ribosomal protein uS19 family.

Its function is as follows. Protein S19 forms a complex with S13 that binds strongly to the 16S ribosomal RNA. In Spiroplasma kunkelii, this protein is Small ribosomal subunit protein uS19.